The primary structure comprises 269 residues: MSGKDEYYNKSKQQGYRARSAYKLKQIDEEANLFERGDTVVDLGAAPGGWLQVAAEEVGESGTVVGVDLQRIDDLDDHDVETIRGDMTEERTRHYLREAIGERGADVVISDMAPNMTGEYALDHARSVHLARQAFDVAEELLAPGGDFVVKVFQGEDLDAFREDVRAEFEYLRTVSPPASRDSSSEVYLVAKGLNTAPVAAGDRIEVTVEERGDEGDGIAYVEGYSIFVSDADVGETVTVEVVDAKPRFGFATRVDVGTPDSDESDEGE.

Positions 48, 50, 68, 86, and 111 each coordinate S-adenosyl-L-methionine. Catalysis depends on K151, which acts as the Proton acceptor. In terms of domain architecture, TRAM spans 198–256; that stretch reads PVAAGDRIEVTVEERGDEGDGIAYVEGYSIFVSDADVGETVTVEVVDAKPRFGFATRVD.

This sequence belongs to the class I-like SAM-binding methyltransferase superfamily. RNA methyltransferase RlmE family.

The protein resides in the cytoplasm. It carries out the reaction uridine(2552) in 23S rRNA + S-adenosyl-L-methionine = 2'-O-methyluridine(2552) in 23S rRNA + S-adenosyl-L-homocysteine + H(+). Specifically methylates the uridine in position 2552 of 23S rRNA at the 2'-O position of the ribose in the fully assembled 50S ribosomal subunit. This chain is Ribosomal RNA large subunit methyltransferase E, found in Halorubrum lacusprofundi (strain ATCC 49239 / DSM 5036 / JCM 8891 / ACAM 34).